A 147-amino-acid polypeptide reads, in one-letter code: Hemoglobin subunit beta-1 (147 aa).

The region spanning 3-147 is the Globin domain; the sequence is NLTAKERQLI…IADALGKGYH (145 aa). The heme b site is built by His64 and His93.

This sequence belongs to the globin family. As to quaternary structure, heterotetramer of two alpha chains and two beta chains. In terms of tissue distribution, red blood cells.

Functionally, involved in oxygen transport from the lung to the various peripheral tissues. In Xenopus tropicalis (Western clawed frog), this protein is Hemoglobin subunit beta-1 (hbb1).